The sequence spans 321 residues: MLIDSYDRVVDYLRISVTERCNFRCQYCMPEKPFSWVPKENLLTFEELFLFVKVAIDEGIRKIRITGGEPLLREDLDKFIKMIFDYAPDIDLAMTTNAYLLKSTAQKLRDAGLKRLNVSIDTLKPEVAFAIAGKDVLKNVLDGVNEALAVGLKVKVNMVPMKNMNAQEIVDVLEYSKKRGMTIRFIEYMENKFASKEISGLKSDELLSMLREHYEFVDEGYDGASPSRYYKMSDGYRFGIIEPYGDDFCKQCNRIRLTAEGQLIPCLYFDEALSIAKSIKEGDIVAASEVLRDVVKNKPEKNRWGGEDGEVSTRAFYETGG.

One can recognise a Radical SAM core domain in the interval 5 to 227 (SYDRVVDYLR…DEGYDGASPS (223 aa)). A GTP-binding site is contributed by R14. Residues C21 and C25 each contribute to the [4Fe-4S] cluster site. Y27 is an S-adenosyl-L-methionine binding site. A [4Fe-4S] cluster-binding site is contributed by C28. R64 is a GTP binding site. G68 contributes to the S-adenosyl-L-methionine binding site. Position 95 (T95) interacts with GTP. S119 lines the S-adenosyl-L-methionine pocket. K155 serves as a coordination point for GTP. Residue M189 coordinates S-adenosyl-L-methionine. Positions 249 and 252 each coordinate [4Fe-4S] cluster. Residue 254–256 (RIR) participates in GTP binding. C266 is a [4Fe-4S] cluster binding site.

This sequence belongs to the radical SAM superfamily. MoaA family. Monomer and homodimer. It depends on [4Fe-4S] cluster as a cofactor.

The enzyme catalyses GTP + AH2 + S-adenosyl-L-methionine = (8S)-3',8-cyclo-7,8-dihydroguanosine 5'-triphosphate + 5'-deoxyadenosine + L-methionine + A + H(+). It participates in cofactor biosynthesis; molybdopterin biosynthesis. Catalyzes the cyclization of GTP to (8S)-3',8-cyclo-7,8-dihydroguanosine 5'-triphosphate. The chain is GTP 3',8-cyclase from Sulfurimonas denitrificans (strain ATCC 33889 / DSM 1251) (Thiomicrospira denitrificans (strain ATCC 33889 / DSM 1251)).